We begin with the raw amino-acid sequence, 328 residues long: Methionyl-tRNA formyltransferase (328 aa).

110-113 (SLLP) is a (6S)-5,6,7,8-tetrahydrofolate binding site.

The protein belongs to the Fmt family.

The catalysed reaction is L-methionyl-tRNA(fMet) + (6R)-10-formyltetrahydrofolate = N-formyl-L-methionyl-tRNA(fMet) + (6S)-5,6,7,8-tetrahydrofolate + H(+). Functionally, attaches a formyl group to the free amino group of methionyl-tRNA(fMet). The formyl group appears to play a dual role in the initiator identity of N-formylmethionyl-tRNA by promoting its recognition by IF2 and preventing the misappropriation of this tRNA by the elongation apparatus. This chain is Methionyl-tRNA formyltransferase, found in Prochlorococcus marinus (strain MIT 9312).